Here is a 271-residue protein sequence, read N- to C-terminus: Plasmanylethanolamine desaturase 1 (271 aa).

Helical transmembrane passes span 48–68 (WCCV…LLLL), 75–95 (PLVM…SGLV), and 162–182 (VLEQ…FGTF). The Histidine box-1 signature appears at 187-191 (HKWSH). The short motif at 214–218 (HHRIH) is the Histidine box-2 element.

This sequence belongs to the fatty acid desaturase CarF family.

It localises to the endoplasmic reticulum membrane. The catalysed reaction is a 1-(1,2-saturated alkyl)-2-acyl-sn-glycero-3-phosphoethanolamine + 2 Fe(II)-[cytochrome b5] + O2 + 2 H(+) = a 1-O-(1Z-alkenyl)-2-acyl-sn-glycero-3-phosphoethanolamine + 2 Fe(III)-[cytochrome b5] + 2 H2O. The enzyme catalyses a 1-O-hexadecyl-2-acyl-sn-glycero-3-phosphoethanolamine + 2 Fe(II)-[cytochrome b5] + O2 + 2 H(+) = a 1-O-(1Z-hexadecenyl)-2-acyl-sn-glycero-3-phosphoethanolamine + 2 Fe(III)-[cytochrome b5] + 2 H2O. It catalyses the reaction a 1-O-octadecyl-2-acyl-sn-glycero-3-phosphoethanolamine + 2 Fe(II)-[cytochrome b5] + O2 + 2 H(+) = a 1-O-(1Z-octadecenyl)-2-acyl-sn-glycero-3-phosphoethanolamine + 2 Fe(III)-[cytochrome b5] + 2 H2O. It carries out the reaction a 1-O-(9Z-octadecenyl)-2-acyl-sn-glycero-3-phosphoethanolamine + 2 Fe(II)-[cytochrome b5] + O2 + 2 H(+) = a 1-O-(1Z,9Z-octadecadienyl)-2-acyl-sn-glycero-3-phosphoethanolamine + 2 Fe(III)-[cytochrome b5] + 2 H2O. It participates in lipid metabolism; fatty acid metabolism. Functionally, plasmanylethanolamine desaturase involved in plasmalogen biogenesis in the endoplasmic reticulum membrane. Plasmalogens are glycerophospholipids with a hydrocarbon chain linked by a vinyl ether bond at the glycerol sn-1 position, and are involved in antioxidative and signaling mechanisms. This Bos taurus (Bovine) protein is Plasmanylethanolamine desaturase 1.